Reading from the N-terminus, the 305-residue chain is Dihydroorotate dehydrogenase B (NAD(+)), catalytic subunit (305 aa).

Residues S23 and K47 to G48 each bind FMN. Substrate is bound by residues K47 and N71 to L75. N101 and N129 together coordinate FMN. A substrate-binding site is contributed by N129. C132 functions as the Nucleophile in the catalytic mechanism. FMN-binding residues include K167 and I193. N194–T195 is a binding site for substrate. Residues G219, G245–G246, and G267–T268 contribute to the FMN site.

The protein belongs to the dihydroorotate dehydrogenase family. Type 1 subfamily. Heterotetramer of 2 PyrK and 2 PyrD type B subunits. FMN is required as a cofactor.

It localises to the cytoplasm. The enzyme catalyses (S)-dihydroorotate + NAD(+) = orotate + NADH + H(+). It participates in pyrimidine metabolism; UMP biosynthesis via de novo pathway; orotate from (S)-dihydroorotate (NAD(+) route): step 1/1. Catalyzes the conversion of dihydroorotate to orotate with NAD(+) as electron acceptor. This Geobacter sp. (strain M21) protein is Dihydroorotate dehydrogenase B (NAD(+)), catalytic subunit (pyrD).